Consider the following 317-residue polypeptide: Regulator of microtubule dynamics protein 1 (317 aa).

K168 bears the N6-succinyllysine mark. TPR repeat units follow at residues 171–207 (AICI…NPKD) and 225–261 (PWYQ…DPNF).

The protein belongs to the RMDN family. Interacts with microtubules.

It localises to the cytoplasm. It is found in the cytoskeleton. Its subcellular location is the spindle. The protein localises to the spindle pole. The polypeptide is Regulator of microtubule dynamics protein 1 (RMDN1) (Bos taurus (Bovine)).